Reading from the N-terminus, the 576-residue chain is MLRTVSNAFTTRSHVGSTASSNSWSTIVPALARFGSIGVLRAAVELINDGEKPDASPLVHLLRVSGNYGYVSLCRQLHGYVTKHGFVSNTRLSNSLMRFYKTSDSLEDAHKVFDEMPDPDVISWNSLVSGYVQSGRFQEGICLFLELHRSDVFPNEFSFTAALAACARLHLSPLGACIHSKLVKLGLEKGNVVVGNCLIDMYGKCGFMDDAVLVFQHMEEKDTVSWNAIVASCSRNGKLELGLWFFHQMPNPDTVTYNELIDAFVKSGDFNNAFQVLSDMPNPNSSSWNTILTGYVNSEKSGEATEFFTKMHSSGVRFDEYSLSIVLAAVAALAVVPWGSLIHACAHKLGLDSRVVVASALIDMYSKCGMLKHAELMFWTMPRKNLIVWNEMISGYARNGDSIEAIKLFNQLKQERFLKPDRFTFLNLLAVCSHCEVPMEVMLGYFEMMINEYRIKPSVEHCCSLIRAMGQRGEVWQAKQVIQEFGFGYDGVAWRALLGACSARKDLKAAKTVAAKMIELGDADKDEYLYIVMSNLYAYHERWREVGQIRKIMRESGVLKEVGSSWIDSRTKCSSY.

PPR repeat units lie at residues 20 to 53, 54 to 88, 89 to 119, 120 to 154, 155 to 189, 191 to 225, 226 to 252, 253 to 287, 288 to 318, 319 to 353, 354 to 384, 385 to 419, 421 to 452, and 458 to 488; these read SSNS…GEKP, DASP…GFVS, NTRL…MPDP, DVIS…DVFP, NEFS…GLEK, NVVV…DTVS, WNAI…MPNP, DTVT…NSSS, WNTI…GVRF, DEYS…GLDS, RVVV…MPRK, NLIV…RFLK, DRFT…MINE, and SVEH…FGFG. Residues 493 to 570 form a type E motif region; that stretch reads AWRALLGACS…EVGSSWIDSR (78 aa).

Belongs to the PPR family. PCMP-E subfamily.

This chain is Putative pentatricopeptide repeat-containing protein At5g47460 (PCMP-E103), found in Arabidopsis thaliana (Mouse-ear cress).